Reading from the N-terminus, the 270-residue chain is 3-methyl-2-oxobutanoate hydroxymethyltransferase (270 aa).

2 residues coordinate Mg(2+): Asp43 and Asp82. 3-methyl-2-oxobutanoate is bound by residues 43–44 (DS), Asp82, and Lys110. Glu112 is a binding site for Mg(2+). The active-site Proton acceptor is the Glu179.

Belongs to the PanB family. Homodecamer; pentamer of dimers. Requires Mg(2+) as cofactor.

The protein resides in the cytoplasm. It catalyses the reaction 3-methyl-2-oxobutanoate + (6R)-5,10-methylene-5,6,7,8-tetrahydrofolate + H2O = 2-dehydropantoate + (6S)-5,6,7,8-tetrahydrofolate. It participates in cofactor biosynthesis; (R)-pantothenate biosynthesis; (R)-pantoate from 3-methyl-2-oxobutanoate: step 1/2. Functionally, catalyzes the reversible reaction in which hydroxymethyl group from 5,10-methylenetetrahydrofolate is transferred onto alpha-ketoisovalerate to form ketopantoate. The sequence is that of 3-methyl-2-oxobutanoate hydroxymethyltransferase from Psychrobacter sp. (strain PRwf-1).